We begin with the raw amino-acid sequence, 379 residues long: Putative acetyl-CoA C-acetyltransferase VraB (379 aa).

The active-site Acyl-thioester intermediate is the C86. The active-site Proton acceptor is H338.

This sequence belongs to the thiolase-like superfamily. Thiolase family.

This chain is Putative acetyl-CoA C-acetyltransferase VraB (vraB), found in Staphylococcus aureus (strain MSSA476).